Reading from the N-terminus, the 131-residue chain is Holo-[acyl-carrier-protein] synthase (131 aa).

Positions 8 and 59 each coordinate Mg(2+).

This sequence belongs to the P-Pant transferase superfamily. AcpS family. The cofactor is Mg(2+).

It localises to the cytoplasm. The enzyme catalyses apo-[ACP] + CoA = holo-[ACP] + adenosine 3',5'-bisphosphate + H(+). Transfers the 4'-phosphopantetheine moiety from coenzyme A to a Ser of acyl-carrier-protein. The chain is Holo-[acyl-carrier-protein] synthase from Rickettsia felis (strain ATCC VR-1525 / URRWXCal2) (Rickettsia azadi).